The following is a 202-amino-acid chain: PXMP2/4 family protein 1 (202 aa).

A run of 4 helical transmembrane segments spans residues 21-41, 54-72, 138-154, and 161-177; these read PVIT…TLAQ, LMMC…HFWF, KAWM…FRFV, and LISN…LSTV.

It belongs to the peroxisomal membrane protein PXMP2/4 family.

Its subcellular location is the membrane. The sequence is that of PXMP2/4 family protein 1 from Dictyostelium discoideum (Social amoeba).